The following is a 502-amino-acid chain: Carbon catabolite-derepressing protein kinase (502 aa).

The Protein kinase domain maps to 14 to 269 (YYLGKILGVG…IGEIRKHSWF (256 aa)). ATP contacts are provided by residues 20–28 (LGVGTFAKV) and Lys-43. Residue Asp-140 is the Proton acceptor of the active site. Thr-173 carries the phosphothreonine; by autocatalysis modification. The UBA domain occupies 290 to 330 (MIDEDTLRDVVKLGYDKDHVCESLCNRLQNEETVAYYLLLD). The 49-residue stretch at 453–501 (NSRLPAVIKFEIQLYKTKDDKYLLDMQRVTGPQLLFLEFCAAFLTNLRV) folds into the KA1 domain.

Belongs to the protein kinase superfamily. CAMK Ser/Thr protein kinase family. SNF1 subfamily.

The enzyme catalyses L-seryl-[protein] + ATP = O-phospho-L-seryl-[protein] + ADP + H(+). It carries out the reaction L-threonyl-[protein] + ATP = O-phospho-L-threonyl-[protein] + ADP + H(+). Essential for release from glucose repression. This chain is Carbon catabolite-derepressing protein kinase (RKIN1), found in Secale cereale (Rye).